A 310-amino-acid polypeptide reads, in one-letter code: Ribosomal RNA small subunit methyltransferase H (310 aa).

S-adenosyl-L-methionine contacts are provided by residues 35-37 (GGH), D52, F79, D100, and Q107.

The protein belongs to the methyltransferase superfamily. RsmH family.

Its subcellular location is the cytoplasm. It catalyses the reaction cytidine(1402) in 16S rRNA + S-adenosyl-L-methionine = N(4)-methylcytidine(1402) in 16S rRNA + S-adenosyl-L-homocysteine + H(+). In terms of biological role, specifically methylates the N4 position of cytidine in position 1402 (C1402) of 16S rRNA. In Anaeromyxobacter dehalogenans (strain 2CP-1 / ATCC BAA-258), this protein is Ribosomal RNA small subunit methyltransferase H.